Consider the following 475-residue polypeptide: MELPSHKTKIIATIGPASKQKETIKKMIKAGMSVARINFSHGTLEEHAKTIETVRDVAEKLERRVAILGDLPGLKMRVGKIKGDSVTLRKGDKVVLTTRDIEGDETTIPVEFKDLPKLVSKGDTIYLSDGYIMLRVEEVRENEVECVVVNGGILFSHKGINIPKANLPIEAITPRDFEIIEFAIEHGVDAIGLSFVGSVYDVLKVKSFLEKKSADLFVIAKIERPDAVRNFDEILNAADGIMIARGDLGVEMPIEKLPIMQKQLIKKTNLAAKPVITATQMLVSMTTERIPKRAEVTDVANAILDGTDAVMLSEETAIGKYPVESVEMMAKIAKTTEEYRESLGYSRLRAWIDSLPKRSTIKEAITRSVIDALCAIDIKYILTPTRTGLTPRLISRFKPKQWILAFSSSERVCNNLAFSYGVYPFCMDENFNEKDIIMLVKGLGIVKEDDTVLLTEGRPIGKTVGTNTMRIFQIP.

A substrate-binding site is contributed by Arg36. K(+)-binding residues include Asn38, Ser40, and Asp70. 38–41 contributes to the ATP binding site; the sequence is NFSH. Arg77 and Lys158 together coordinate ATP. Residue Glu223 participates in Mg(2+) binding. Substrate-binding residues include Gly246, Asp247, and Thr279. Asp247 provides a ligand contact to Mg(2+).

This sequence belongs to the pyruvate kinase family. As to quaternary structure, homotetramer. Requires a divalent metal cation as cofactor.

It carries out the reaction pyruvate + ATP = phosphoenolpyruvate + ADP + H(+). Its pathway is carbohydrate degradation; glycolysis; pyruvate from D-glyceraldehyde 3-phosphate: step 5/5. This is Pyruvate kinase (pki) from Thermococcus litoralis (strain ATCC 51850 / DSM 5473 / JCM 8560 / NS-C).